The sequence spans 216 residues: Sperm microtubule inner protein 8 (216 aa).

In terms of assembly, microtubule inner protein component of sperm flagellar doublet microtubules. As to expression, expressed in testis, prostate and placenta.

It localises to the cytoplasm. It is found in the cytoskeleton. The protein resides in the flagellum axoneme. Functionally, microtubule inner protein (MIP) part of the dynein-decorated doublet microtubules (DMTs) in flagellum axoneme. May serve to reinforce and thus stabilize the microtubule structure in the sperm flagella. The chain is Sperm microtubule inner protein 8 from Homo sapiens (Human).